A 152-amino-acid polypeptide reads, in one-letter code: Smith-Magenis syndrome chromosomal region candidate gene 5 protein homolog (152 aa).

The segment at 41–77 (TPCAGPSSQAPPQPPQASPPAAPDHSRTPSLLASSHS) is disordered. A compositionally biased stretch (pro residues) spans 49-62 (QAPPQPPQASPPAA).

The polypeptide is Smith-Magenis syndrome chromosomal region candidate gene 5 protein homolog (SMCR5) (Macaca fascicularis (Crab-eating macaque)).